The following is a 192-amino-acid chain: Immunoglobulin superfamily member 23 (192 aa).

The disordered stretch occupies residues 1 to 26 (MRAKPQSPLPRNPVPAWSPPTTTTDP). Residues 7–18 (SPLPRNPVPAWS) are compositionally biased toward pro residues. Residues 20 to 128 (PTTTTDPMLE…QLVSEPVTIS (109 aa)) form the Ig-like domain. Asn-64 carries an N-linked (GlcNAc...) asparagine glycan. Residues 158 to 178 (LLAAGILGAGALIAGMCFIII) traverse the membrane as a helical segment.

As to expression, expressed in bone and small intestine. Highly expressed in osteoclasts, and low expressed in osteoblasts and peripheral blood mononuclear cells (PBMCs).

It localises to the cell membrane. Functionally, may be involved in osteoclast differentiation. In Homo sapiens (Human), this protein is Immunoglobulin superfamily member 23.